The primary structure comprises 151 residues: Protein SprT-like (151 aa).

Positions 7 to 147 (QKLTESISES…GKCKGKLHLH (141 aa)) constitute a SprT-like domain. His-67 is a Zn(2+) binding site. Residue Glu-68 is part of the active site. His-71 serves as a coordination point for Zn(2+).

This sequence belongs to the SprT family. Requires Zn(2+) as cofactor.

It localises to the cytoplasm. The polypeptide is Protein SprT-like (Staphylococcus carnosus (strain TM300)).